We begin with the raw amino-acid sequence, 1068 residues long: MPLNKDIKKVLVIGSGPIVIGQAAEFDYSGTQACEGLKEEGVEVVLINSNPATIMTDKKVADKVYLEPLTVEFVEKVIAKERPDSLLAGMGGQTGLNLAVELYDKGILKKYGVNVIGTSIESIKEGEDRELFRNVMSRINGPVIQSEIVTDMENGKAFANKIGYPIIVRPAYTLGGTGGGIAESEEELDEILALGLQLSSIGQVLLEKSVKGWKEIEYEVMRDSRGNCITVCNMENIDPVGIHTGDSIVVAPSQTLSDKEYQMLRSASINILNSIGIKGGCNVQFALNPNSFEYAVIEINPRVSRSSALASKATGYPIAKVASKIALGYTLDEIKNAVTQKTYACFEPSLDYVVVKIPKWPFDKFQGADRVLGTKMMATGEIMAIGSNFEAAFLKGTRSLEIGKYSLEHKKFRELSIEELKTRVISPDDERIFALAEMLRRDYRMDKVAEITGIDKFFIKKFRWIVEEEQRLRLSKIDDLDKEWLYKLKKKGFSDKGIADMLKVNPEDIYRLRNIWRINPVYKMVDTCGGEFEALSPYYYSTYDVYDEVEVSKNKKVIVIGSGPIRIGQGIEFDYASVHCVKALKKLGIETIIVNNNPETVSTDFDVSDKLYFEPLTEEDVLNIVEKEKPDGVILQFGGQTAIKLANFLKEKNISTLGTTADQIDMAEDREKFDELLEKLKIARPKGKGIWSVEDGLEEAKKLGFPVLVRPSYVLGGQGMEITHDEKELVYYLSNAFQKDKKNPILIDKYLMGREIEVDAISDGEDVLIPGIMEHLERAGVHSGDSITMYPTQNVSKDIKEKILEYTKKLALGIGIKGMINIQFIEFQGNLYVIEVNPRASRTVPYISKVSKVPIVDIATRVMLGEKLNDLGYGVGVYKEPELISVKVPVFSTQKLPRVEVCLGPEMKSTGEVLGVGKTLEEALYKGFIGANMSIKKEKGTVLATINDHDKEEFLPIAKKLHSLGYKFIATSKTAELLKEEGIEVKQVRKLKEESPNIIDTIKNDEVDLVVNTPTKGNDSKRDGFHIRRAAIERNLGVITSLDTLKAIVDIKFKEIKDETLYIFDLSN.

Residues 1-401 (MPLNKDIKKV…AFLKGTRSLE (401 aa)) form a carboxyphosphate synthetic domain region. ATP is bound by residues R129, R169, G175, G176, K208, V210, E215, G241, I242, H243, Q284, and E298. Residues 133 to 327 (RNVMSRINGP…IAKVASKIAL (195 aa)) form the ATP-grasp 1 domain. Residues Q284, E298, and N300 each contribute to the Mg(2+) site. Mn(2+) is bound by residues Q284, E298, and N300. The interval 402-549 (IGKYSLEHKK…YSTYDVYDEV (148 aa)) is oligomerization domain. The segment at 550–932 (EVSKNKKVIV…ALYKGFIGAN (383 aa)) is carbamoyl phosphate synthetic domain. The ATP-grasp 2 domain occupies 674 to 864 (DELLEKLKIA…IVDIATRVML (191 aa)). Residues R710, K749, L751, E755, G780, V781, H782, S783, Q823, and E835 each coordinate ATP. Residues Q823, E835, and N837 each coordinate Mg(2+). 3 residues coordinate Mn(2+): Q823, E835, and N837. In terms of domain architecture, MGS-like spans 933–1068 (MSIKKEKGTV…ETLYIFDLSN (136 aa)). The segment at 933-1068 (MSIKKEKGTV…ETLYIFDLSN (136 aa)) is allosteric domain.

This sequence belongs to the CarB family. In terms of assembly, composed of two chains; the small (or glutamine) chain promotes the hydrolysis of glutamine to ammonia, which is used by the large (or ammonia) chain to synthesize carbamoyl phosphate. Tetramer of heterodimers (alpha,beta)4. Mg(2+) serves as cofactor. Requires Mn(2+) as cofactor.

It carries out the reaction hydrogencarbonate + L-glutamine + 2 ATP + H2O = carbamoyl phosphate + L-glutamate + 2 ADP + phosphate + 2 H(+). The catalysed reaction is hydrogencarbonate + NH4(+) + 2 ATP = carbamoyl phosphate + 2 ADP + phosphate + 2 H(+). The protein operates within amino-acid biosynthesis; L-arginine biosynthesis; carbamoyl phosphate from bicarbonate: step 1/1. Its pathway is pyrimidine metabolism; UMP biosynthesis via de novo pathway; (S)-dihydroorotate from bicarbonate: step 1/3. Its function is as follows. Large subunit of the glutamine-dependent carbamoyl phosphate synthetase (CPSase). CPSase catalyzes the formation of carbamoyl phosphate from the ammonia moiety of glutamine, carbonate, and phosphate donated by ATP, constituting the first step of 2 biosynthetic pathways, one leading to arginine and/or urea and the other to pyrimidine nucleotides. The large subunit (synthetase) binds the substrates ammonia (free or transferred from glutamine from the small subunit), hydrogencarbonate and ATP and carries out an ATP-coupled ligase reaction, activating hydrogencarbonate by forming carboxy phosphate which reacts with ammonia to form carbamoyl phosphate. This chain is Carbamoyl phosphate synthase large chain, found in Clostridium botulinum (strain Kyoto / Type A2).